A 357-amino-acid polypeptide reads, in one-letter code: Sulfate/thiosulfate import ATP-binding protein CysA (357 aa).

One can recognise an ABC transporter domain in the interval 3 to 237 (IQIQGVSKQY…PASPFVYDFL (235 aa)). 35–42 (GPSGSGKT) is a binding site for ATP.

This sequence belongs to the ABC transporter superfamily. Sulfate/tungstate importer (TC 3.A.1.6) family. The complex is composed of two ATP-binding proteins (CysA), two transmembrane proteins (CysT and CysW) and a solute-binding protein (CysP).

It localises to the cell membrane. The enzyme catalyses sulfate(out) + ATP + H2O = sulfate(in) + ADP + phosphate + H(+). It catalyses the reaction thiosulfate(out) + ATP + H2O = thiosulfate(in) + ADP + phosphate + H(+). Its function is as follows. Part of the ABC transporter complex CysAWTP involved in sulfate/thiosulfate import. Responsible for energy coupling to the transport system. This chain is Sulfate/thiosulfate import ATP-binding protein CysA, found in Bacillus cereus (strain ATCC 10987 / NRS 248).